The following is a 169-amino-acid chain: Der GTPase-activating protein YihI (169 aa).

Disordered regions lie at residues 1–98 (MKPS…PQAE) and 144–169 (GLSYDDDEEEEEDEKQEDMMRLLRGN). Residues 10-19 (SKGHAKARRK) show a composition bias toward basic residues. Over residues 20-30 (TREELDQEARD) the composition is skewed to basic and acidic residues. A compositionally biased stretch (basic residues) spans 31–40 (RKRLKKRRGH). A compositionally biased stretch (polar residues) spans 49–58 (GNTTSGSKGQ). The span at 147-159 (YDDDEEEEEDEKQ) shows a compositional bias: acidic residues. The span at 160 to 169 (EDMMRLLRGN) shows a compositional bias: basic and acidic residues.

Belongs to the YihI family. Interacts with Der.

Its function is as follows. A GTPase-activating protein (GAP) that modifies Der/EngA GTPase function. May play a role in ribosome biogenesis. In Escherichia coli O6:K15:H31 (strain 536 / UPEC), this protein is Der GTPase-activating protein YihI.